The chain runs to 534 residues: Peptide chain release factor 3 (534 aa).

In terms of domain architecture, tr-type G spans 9-278; it reads ARRRTFAIIS…FFVEHAPPPQ (270 aa). GTP contacts are provided by residues 18–25, 86–90, and 140–143; these read SHPDAGKT, DTPGH, and NKLD.

This sequence belongs to the TRAFAC class translation factor GTPase superfamily. Classic translation factor GTPase family. PrfC subfamily.

It is found in the cytoplasm. Increases the formation of ribosomal termination complexes and stimulates activities of RF-1 and RF-2. It binds guanine nucleotides and has strong preference for UGA stop codons. It may interact directly with the ribosome. The stimulation of RF-1 and RF-2 is significantly reduced by GTP and GDP, but not by GMP. The chain is Peptide chain release factor 3 from Xanthomonas axonopodis pv. citri (strain 306).